The sequence spans 337 residues: MKTLGEFIVEKQLDFSHATGELTALLSAIKLGAKIIHRDINKAGLVDILGASGVSNIQGEDQMKLDLFANEKLKAALKARGEVAGIASEEEDDIVIFDGGRAENAKYVVLMDPLDGSSNIDVNVSVGTIFSIYRRITPFGTPITEEDFLQPGTKQVAAGYVVYGSSTMLVYTTGYGVHAFTYDPSLGVFCLSHEKVRYPATGCMYSINEGNYIKFPLGVKKYIKYCQEQDEATKRPYTSRYIGSLVADFHRNLLKGGIYIYPSTASHPQGKLRLLYECNPMAFLAEQAGGKATDGVNRILDIVPEKLHQRAPFFVGTKSMVEDAEGFIAKFPDEEAK.

Mg(2+)-binding residues include Glu-89, Asp-112, Leu-114, and Asp-115. Substrate contacts are provided by residues 115 to 118, Asn-208, Tyr-241, and Lys-271; that span reads DGSS. Mg(2+) is bound at residue Glu-277.

This sequence belongs to the FBPase class 1 family. As to quaternary structure, homotetramer. Mg(2+) serves as cofactor.

The protein resides in the cytoplasm. The enzyme catalyses beta-D-fructose 1,6-bisphosphate + H2O = beta-D-fructose 6-phosphate + phosphate. The protein operates within carbohydrate biosynthesis; gluconeogenesis. The chain is Fructose-1,6-bisphosphatase class 1 from Yersinia pseudotuberculosis serotype O:1b (strain IP 31758).